We begin with the raw amino-acid sequence, 292 residues long: Shikimate dehydrogenase (NADP(+)) (292 aa).

Shikimate-binding positions include 22-24 (SLS) and serine 69. The active-site Proton acceptor is lysine 73. Shikimate-binding residues include asparagine 94 and aspartate 111. NADP(+) is bound by residues 135–139 (GVGGA) and isoleucine 236. A shikimate-binding site is contributed by tyrosine 238. Glycine 260 contributes to the NADP(+) binding site.

It belongs to the shikimate dehydrogenase family. As to quaternary structure, homodimer.

It catalyses the reaction shikimate + NADP(+) = 3-dehydroshikimate + NADPH + H(+). It participates in metabolic intermediate biosynthesis; chorismate biosynthesis; chorismate from D-erythrose 4-phosphate and phosphoenolpyruvate: step 4/7. Functionally, involved in the biosynthesis of the chorismate, which leads to the biosynthesis of aromatic amino acids. Catalyzes the reversible NADPH linked reduction of 3-dehydroshikimate (DHSA) to yield shikimate (SA). The protein is Shikimate dehydrogenase (NADP(+)) of Streptococcus pyogenes serotype M2 (strain MGAS10270).